The following is a 183-amino-acid chain: Probable chorismate pyruvate-lyase (183 aa).

Substrate contacts are provided by Arg79, Leu115, and Glu168.

It belongs to the UbiC family.

It localises to the cytoplasm. The enzyme catalyses chorismate = 4-hydroxybenzoate + pyruvate. It functions in the pathway cofactor biosynthesis; ubiquinone biosynthesis. Functionally, removes the pyruvyl group from chorismate, with concomitant aromatization of the ring, to provide 4-hydroxybenzoate (4HB) for the ubiquinone pathway. This chain is Probable chorismate pyruvate-lyase, found in Chromohalobacter salexigens (strain ATCC BAA-138 / DSM 3043 / CIP 106854 / NCIMB 13768 / 1H11).